We begin with the raw amino-acid sequence, 363 residues long: Protein RecA (363 aa).

G79–T86 is an ATP binding site.

The protein belongs to the RecA family.

Its subcellular location is the cytoplasm. Can catalyze the hydrolysis of ATP in the presence of single-stranded DNA, the ATP-dependent uptake of single-stranded DNA by duplex DNA, and the ATP-dependent hybridization of homologous single-stranded DNAs. It interacts with LexA causing its activation and leading to its autocatalytic cleavage. This is Protein RecA from Borrelia turicatae (strain 91E135).